Reading from the N-terminus, the 368-residue chain is Caffeine synthase 3 (368 aa).

An S-adenosyl-L-homocysteine-binding site is contributed by tyrosine 23. Residue threonine 30 coordinates caffeine. S-adenosyl-L-homocysteine is bound by residues cysteine 65, asparagine 70, aspartate 102, leucine 103, serine 137, and phenylalanine 138. Caffeine contacts are provided by tyrosine 155, histidine 158, and tryptophan 159. Asparagine 176 is a binding site for Mg(2+). Caffeine is bound at residue arginine 224. Mg(2+) contacts are provided by aspartate 262, phenylalanine 264, and asparagine 265. Residue phenylalanine 320 participates in caffeine binding.

This sequence belongs to the methyltransferase superfamily. Type-7 methyltransferase family. Mg(2+) is required as a cofactor.

The enzyme catalyses theobromine + S-adenosyl-L-methionine = caffeine + S-adenosyl-L-homocysteine + H(+). It catalyses the reaction 7-methylxanthine + S-adenosyl-L-methionine = theobromine + S-adenosyl-L-homocysteine + H(+). Its pathway is alkaloid biosynthesis. Its function is as follows. Involved in the biosynthesis of caffeine. Catalyzes the conversion of 7-methylxanthine (7mX) to theobromine and of theobromine to caffeine. The polypeptide is Caffeine synthase 3 (Camellia sinensis (Tea plant)).